The following is a 438-amino-acid chain: Transcriptional regulator Mb0495 (438 aa).

Polar residues predominate over residues 1 to 12 (MYSTNRTSQSLS). The segment at 1 to 22 (MYSTNRTSQSLSRKPGRKHQLR) is disordered. Residues 52-73 (VGRDVIAGSTSLSIATVNRQVI) constitute a DNA-binding region (H-T-H motif).

It belongs to the ROK (NagC/XylR) family.

Its function is as follows. Positively regulates the expression of PE13 and PPE18. The sequence is that of Transcriptional regulator Mb0495 from Mycobacterium bovis (strain ATCC BAA-935 / AF2122/97).